The chain runs to 154 residues: MVLSDAEWQLVLNIWAKVEADVAGHGQDILIRLFKGHPETLEKFDKFKHLKTEAEMKASEDLKKHGNTVLTALGGILKKKGHHEAELKPLAQSHATKHKIPIKYLEFISDAIIHVLHSRHPGDFGADAQAAMNKALELFRKDIAAKYKELGFQG.

The Globin domain maps to 2–148 (VLSDAEWQLV…FRKDIAAKYK (147 aa)). The residue at position 4 (Ser4) is a Phosphoserine. His65 contributes to the nitrite binding site. Residue His65 coordinates O2. Position 68 is a phosphothreonine (Thr68). Heme b is bound at residue His94.

The protein belongs to the globin family. In terms of assembly, monomeric.

The protein localises to the cytoplasm. It localises to the sarcoplasm. It catalyses the reaction Fe(III)-heme b-[protein] + nitric oxide + H2O = Fe(II)-heme b-[protein] + nitrite + 2 H(+). The enzyme catalyses H2O2 + AH2 = A + 2 H2O. Its function is as follows. Monomeric heme protein which primary function is to store oxygen and facilitate its diffusion within muscle tissues. Reversibly binds oxygen through a pentacoordinated heme iron and enables its timely and efficient release as needed during periods of heightened demand. Depending on the oxidative conditions of tissues and cells, and in addition to its ability to bind oxygen, it also has a nitrite reductase activity whereby it regulates the production of bioactive nitric oxide. Under stress conditions, like hypoxia and anoxia, it also protects cells against reactive oxygen species thanks to its pseudoperoxidase activity. In Eschrichtius robustus (California gray whale), this protein is Myoglobin (MB).